The chain runs to 434 residues: GTPase Obg (434 aa).

Residues 1 to 158 (MFLDTAKIKV…RELQLELKIL (158 aa)) form the Obg domain. One can recognise an OBG-type G domain in the interval 159–336 (ADVGLVGFPS…LLDATAELLD (178 aa)). Residues 165-172 (GFPSVGKS), 190-194 (FTTIV), 212-215 (DLPG), 282-285 (NKMD), and 317-319 (SGL) each bind GTP. 2 residues coordinate Mg(2+): Ser-172 and Thr-192. In terms of domain architecture, OCT spans 356-434 (GFDEEEKAFE…IGKFEFEFVD (79 aa)).

This sequence belongs to the TRAFAC class OBG-HflX-like GTPase superfamily. OBG GTPase family. Monomer. It depends on Mg(2+) as a cofactor.

It localises to the cytoplasm. In terms of biological role, an essential GTPase which binds GTP, GDP and possibly (p)ppGpp with moderate affinity, with high nucleotide exchange rates and a fairly low GTP hydrolysis rate. Plays a role in control of the cell cycle, stress response, ribosome biogenesis and in those bacteria that undergo differentiation, in morphogenesis control. This Streptococcus pneumoniae (strain Hungary19A-6) protein is GTPase Obg.